Consider the following 266-residue polypeptide: Succinate dehydrogenase [ubiquinone] iron-sulfur subunit, mitochondrial (266 aa).

Residues 1–20 (MLNVLLRRKAFCLVTKKGMA) constitute a mitochondrion transit peptide. One can recognise a 2Fe-2S ferredoxin-type domain in the interval 36-127 (FKVYRWNPDE…QLKIYPLPHM (92 aa)). 4 residues coordinate [2Fe-2S] cluster: Cys87, Cys92, Cys95, and Cys107. The 4Fe-4S ferredoxin-type domain occupies 169-199 (DRKKLDGLYECILCACCSTSCPSYWWNQEQY). The [4Fe-4S] cluster site is built by Cys179, Cys182, and Cys185. Cys189 contributes to the [3Fe-4S] cluster binding site. Trp194 is an a ubiquinone binding site. Residues Cys236 and Cys242 each contribute to the [3Fe-4S] cluster site. Cys246 is a binding site for [4Fe-4S] cluster.

The protein belongs to the succinate dehydrogenase/fumarate reductase iron-sulfur protein family. Component of complex II composed of four subunits: a flavoprotein (FP), an iron-sulfur protein (IP), and a cytochrome b composed of a large and a small subunit. It depends on [2Fe-2S] cluster as a cofactor. Requires [3Fe-4S] cluster as cofactor. [4Fe-4S] cluster is required as a cofactor.

Its subcellular location is the mitochondrion inner membrane. It carries out the reaction a quinone + succinate = fumarate + a quinol. It participates in carbohydrate metabolism; tricarboxylic acid cycle; fumarate from succinate (eukaryal route): step 1/1. Its function is as follows. Subunit of succinate dehydrogenase (SDH) that is involved in complex II of the mitochondrial electron transport chain and is responsible for transferring electrons from succinate to ubiquinone (coenzyme Q). SDH1 and SDH2 form the catalytic dimer. Electrons flow from succinate to the FAD bound to SDH1, and sequentially through the iron-sulfur clusters bound to SDH2 and enter the membrane dimer formed by SDH3 and SDH4. This Saccharomyces cerevisiae (strain ATCC 204508 / S288c) (Baker's yeast) protein is Succinate dehydrogenase [ubiquinone] iron-sulfur subunit, mitochondrial (SDH2).